We begin with the raw amino-acid sequence, 270 residues long: Flavin-dependent thymidylate synthase (270 aa).

The ThyX domain maps to 13 to 218; sequence GFVRLVDQMG…PLAWAAFEEH (206 aa). FAD is bound by residues serine 59, 82-84, and glutamate 90; that span reads RHR. DUMP contacts are provided by residues 79–82, 90–94, and arginine 157; these read QWFR and EISGR. Positions 82–92 match the ThyX motif motif; the sequence is RHRTASVNEIS. FAD contacts are provided by residues 173 to 175 and histidine 179; that span reads DLH. Residue arginine 184 coordinates dUMP. Arginine 184 (involved in ionization of N3 of dUMP, leading to its activation) is an active-site residue.

Belongs to the thymidylate synthase ThyX family. In terms of assembly, homotetramer. The cofactor is FAD.

The enzyme catalyses dUMP + (6R)-5,10-methylene-5,6,7,8-tetrahydrofolate + NADPH + H(+) = dTMP + (6S)-5,6,7,8-tetrahydrofolate + NADP(+). It functions in the pathway pyrimidine metabolism; dTTP biosynthesis. In terms of biological role, catalyzes the reductive methylation of 2'-deoxyuridine-5'-monophosphate (dUMP) to 2'-deoxythymidine-5'-monophosphate (dTMP) while utilizing 5,10-methylenetetrahydrofolate (mTHF) as the methyl donor, and NADPH and FADH(2) as the reductant. This Thermus thermophilus (strain ATCC 27634 / DSM 579 / HB8) protein is Flavin-dependent thymidylate synthase.